A 552-amino-acid chain; its full sequence is ATP synthase subunit alpha (552 aa).

Position 173–180 (173–180) interacts with ATP; it reads GDRQTGKT. The tract at residues 516 to 552 is disordered; the sequence is DGKPLVNEPAPSPLDPGLVRQESIPVHRPAARKDDEG.

It belongs to the ATPase alpha/beta chains family. F-type ATPases have 2 components, CF(1) - the catalytic core - and CF(0) - the membrane proton channel. CF(1) has five subunits: alpha(3), beta(3), gamma(1), delta(1), epsilon(1). CF(0) has three main subunits: a(1), b(2) and c(9-12). The alpha and beta chains form an alternating ring which encloses part of the gamma chain. CF(1) is attached to CF(0) by a central stalk formed by the gamma and epsilon chains, while a peripheral stalk is formed by the delta and b chains.

Its subcellular location is the cell membrane. The enzyme catalyses ATP + H2O + 4 H(+)(in) = ADP + phosphate + 5 H(+)(out). Its function is as follows. Produces ATP from ADP in the presence of a proton gradient across the membrane. The alpha chain is a regulatory subunit. The chain is ATP synthase subunit alpha from Frankia casuarinae (strain DSM 45818 / CECT 9043 / HFP020203 / CcI3).